The primary structure comprises 199 residues: Protein-methionine-sulfoxide reductase heme-binding subunit MsrQ (199 aa).

A run of 6 helical transmembrane segments spans residues 8-28, 54-74, 82-102, 116-136, 149-169, and 171-191; these read IAWLKVFLHLAGFLPLVWLFW, FLLATLLVAPLARYAKQPLLI, LWCFAWATLHLTSYTLLELGI, PYLTLGMICWVILLALAATST, LLHNFVYLVAILAPIHYLWSV, and IVSPQPIIYALLAVVLLACRY.

The protein belongs to the MsrQ family. In terms of assembly, heterodimer of a catalytic subunit (MsrP) and a heme-binding subunit (MsrQ). FMN is required as a cofactor. Heme b serves as cofactor.

It is found in the cell inner membrane. Its function is as follows. Part of the MsrPQ system that repairs oxidized periplasmic proteins containing methionine sulfoxide residues (Met-O), using respiratory chain electrons. Thus protects these proteins from oxidative-stress damage caused by reactive species of oxygen and chlorine generated by the host defense mechanisms. MsrPQ is essential for the maintenance of envelope integrity under bleach stress, rescuing a wide series of structurally unrelated periplasmic proteins from methionine oxidation. MsrQ provides electrons for reduction to the reductase catalytic subunit MsrP, using the quinone pool of the respiratory chain. This Klebsiella pneumoniae (strain 342) protein is Protein-methionine-sulfoxide reductase heme-binding subunit MsrQ.